The chain runs to 877 residues: DNA repair protein rad16 (877 aa).

Serine 71 bears the Phosphoserine; by CK2 mark. The disordered stretch occupies residues 440–490 (SKSIKKPEPSKEREASNTTSRKGVPPSKRRRVRGGNNATSRTTSDNTDAND). Residues 444-454 (KKPEPSKEREA) are compositionally biased toward basic and acidic residues. Positions 475–490 (NNATSRTTSDNTDAND) are enriched in polar residues. The region spanning 652 to 732 (RVIVDLREFR…IPVLLIEFEQ (81 aa)) is the ERCC4 domain.

Belongs to the XPF family. As to quaternary structure, heterodimer composed of rad16 and swi10.

Its subcellular location is the nucleus. It is found in the cytoplasm. The protein resides in the cytoskeleton. The protein localises to the microtubule organizing center. It localises to the spindle pole body. Functionally, endonuclease that specifically degrades single-stranded DNA and which is involved in nucleotide excision repair of DNA damaged with UV light, bulky adducts, or cross-linking agents. Required for double strand break-induced interchromosomal gene conversion. In Schizosaccharomyces pombe (strain 972 / ATCC 24843) (Fission yeast), this protein is DNA repair protein rad16 (rad16).